Reading from the N-terminus, the 540-residue chain is Chaperonin GroEL 2 (540 aa).

ATP contacts are provided by residues 30-33 (TLGP), lysine 51, 87-91 (DGTTT), glycine 415, 479-481 (NAA), and aspartate 495.

The protein belongs to the chaperonin (HSP60) family. Forms a cylinder of 14 subunits composed of two heptameric rings stacked back-to-back. Interacts with the co-chaperonin GroES.

It is found in the cytoplasm. The enzyme catalyses ATP + H2O + a folded polypeptide = ADP + phosphate + an unfolded polypeptide.. Together with its co-chaperonin GroES, plays an essential role in assisting protein folding. The GroEL-GroES system forms a nano-cage that allows encapsulation of the non-native substrate proteins and provides a physical environment optimized to promote and accelerate protein folding. The sequence is that of Chaperonin GroEL 2 from Burkholderia vietnamiensis (strain G4 / LMG 22486) (Burkholderia cepacia (strain R1808)).